Here is a 335-residue protein sequence, read N- to C-terminus: Mycobacterial beta-ketoacyl-[acyl-carrier-protein] synthase III (335 aa).

Catalysis depends on residues Cys-122 and His-258. The interval 259–263 is ACP-binding; that stretch reads QANSR. Asn-289 is a catalytic residue.

It belongs to the thiolase-like superfamily. FabH family. In terms of assembly, homodimer.

Its subcellular location is the cytoplasm. The enzyme catalyses malonyl-[ACP] + dodecanoyl-CoA + H(+) = 3-oxotetradecanoyl-[ACP] + CO2 + CoA. It functions in the pathway lipid metabolism; fatty acid biosynthesis. The protein operates within lipid metabolism; mycolic acid biosynthesis. Catalyzes the condensation reaction of fatty acid synthesis by the addition to an acyl acceptor of two carbons from malonyl-ACP. Catalyzes the first condensation reaction which initiates fatty acid synthesis and may therefore play a role in governing the total rate of fatty acid production. Possesses both acetoacetyl-ACP synthase and acetyl transacylase activities. Its substrate specificity determines the biosynthesis of branched-chain and/or straight-chain of fatty acids. This is Mycobacterial beta-ketoacyl-[acyl-carrier-protein] synthase III from Mycobacterium avium (strain 104).